Consider the following 128-residue polypeptide: Holin-like protein CidA (128 aa).

The next 3 helical transmembrane spans lie at 23 to 43 (LIVEVLHINIPGSILGIIVIF), 58 to 78 (IGALWLLAELLLFFVPSAVGI), and 84 to 104 (ILAEFGTSIILVVLISTFVVM).

This sequence belongs to the CidA/LrgA family. CidA subfamily.

It is found in the cell membrane. Increases the activity of extracellular murein hydrolases possibly by mediating their export via hole formation. Inhibited by the antiholin-like proteins LrgAB. In an unstressed cell, the LrgAB products probably inhibit the function of the CidA protein. When a cell is stressed by the addition of antibiotics or by other factors in the environment, CidA possibly oligomerizes within the bacterial cell membrane, creating lesions that disrupt the proton motive force, which in turn results in loss of cell viability. These lesions are also hypothesized to regulate the subsequent cell lysis by either allowing the murein hydrolases access to the cell wall substrate and/or regulating their activity by a possible change in the cell wall pH that results from loss of membrane potential. The polypeptide is Holin-like protein CidA (Bacillus licheniformis (strain ATCC 14580 / DSM 13 / JCM 2505 / CCUG 7422 / NBRC 12200 / NCIMB 9375 / NCTC 10341 / NRRL NRS-1264 / Gibson 46)).